The primary structure comprises 1180 residues: Chitin synthase 6 (1180 aa).

2 helical membrane passes run 108-128 and 374-394; these read FTIC…IIAF and LLLA…IAAL. Residue asparagine 737 is glycosylated (N-linked (GlcNAc...) asparagine). 3 helical membrane passes run 762–782, 795–815, and 822–842; these read FIVF…VYLV, IPYI…ILFL, and YIGW…FLPI. The DEK-C domain maps to 1118–1175; it reads DPTDEEIKSAVQTYLANQPSLMNVTKRSVREALVAAFPNAELSYKKSMINKAIDDTLS.

This sequence belongs to the chitin synthase family. Class V subfamily.

The protein resides in the cell membrane. Its subcellular location is the cytoplasmic vesicle membrane. The catalysed reaction is [(1-&gt;4)-N-acetyl-beta-D-glucosaminyl](n) + UDP-N-acetyl-alpha-D-glucosamine = [(1-&gt;4)-N-acetyl-beta-D-glucosaminyl](n+1) + UDP + H(+). Functionally, polymerizes chitin, a structural polymer of the cell wall and septum, by transferring the sugar moiety of UDP-GlcNAc to the non-reducing end of the growing chitin polymer. Plays a crucial role during infection and allows the fungus to overcome the resistance of the plant that checks growth of the pathogen and eventually eliminates it. This chain is Chitin synthase 6, found in Mycosarcoma maydis (Corn smut fungus).